Here is a 169-residue protein sequence, read N- to C-terminus: Cytochrome c-type biogenesis protein CcmE (169 aa).

Topologically, residues 1–7 are cytoplasmic; sequence MTRKSRR. The chain crosses the membrane as a helical; Signal-anchor for type II membrane protein span at residues 8-28; that stretch reads LILIAACGAVLALALGLILSA. Over 29–169 the chain is Periplasmic; that stretch reads MSGSIVFFRS…DATLGQRSER (141 aa). Histidine 122 and tyrosine 126 together coordinate heme. The interval 135-169 is disordered; the sequence is LKAQGRWQEGGGKEAPKDAAKPASADATLGQRSER. A compositionally biased stretch (basic and acidic residues) spans 145–154; that stretch reads GGKEAPKDAA.

It belongs to the CcmE/CycJ family.

Its subcellular location is the cell inner membrane. In terms of biological role, heme chaperone required for the biogenesis of c-type cytochromes. Transiently binds heme delivered by CcmC and transfers the heme to apo-cytochromes in a process facilitated by CcmF and CcmH. The sequence is that of Cytochrome c-type biogenesis protein CcmE from Methylorubrum populi (strain ATCC BAA-705 / NCIMB 13946 / BJ001) (Methylobacterium populi).